Consider the following 432-residue polypeptide: Adenylosuccinate synthetase (432 aa).

GTP is bound by residues 13–19 and 41–43; these read GDEGKGK and GHT. Residue D14 is the Proton acceptor of the active site. Mg(2+) is bound by residues D14 and G41. IMP-binding positions include 14–17, 39–42, T130, R144, Q225, T240, and R304; these read DEGK and NAGH. H42 acts as the Proton donor in catalysis. 300–306 contacts substrate; it reads ATTGRSR. GTP-binding positions include R306, 332-334, and 415-417; these read KLD and STG.

It belongs to the adenylosuccinate synthetase family. Homodimer. It depends on Mg(2+) as a cofactor.

Its subcellular location is the cytoplasm. The catalysed reaction is IMP + L-aspartate + GTP = N(6)-(1,2-dicarboxyethyl)-AMP + GDP + phosphate + 2 H(+). Its pathway is purine metabolism; AMP biosynthesis via de novo pathway; AMP from IMP: step 1/2. Its function is as follows. Plays an important role in the de novo pathway of purine nucleotide biosynthesis. Catalyzes the first committed step in the biosynthesis of AMP from IMP. The polypeptide is Adenylosuccinate synthetase (Proteus mirabilis (strain HI4320)).